A 398-amino-acid polypeptide reads, in one-letter code: Succinate--CoA ligase [ADP-forming] subunit beta (398 aa).

The region spanning 9–250 (KQLFARYGVP…VDEEDPVELQ (242 aa)) is the ATP-grasp domain. Residues Lys-50, 57–59 (GRG), Glu-104, Leu-107, and Glu-112 each bind ATP. Mg(2+) contacts are provided by Asn-205 and Asp-219. Substrate is bound by residues Asn-270 and 327 to 329 (GIM).

The protein belongs to the succinate/malate CoA ligase beta subunit family. As to quaternary structure, heterotetramer of two alpha and two beta subunits. Mg(2+) serves as cofactor.

The enzyme catalyses succinate + ATP + CoA = succinyl-CoA + ADP + phosphate. It carries out the reaction GTP + succinate + CoA = succinyl-CoA + GDP + phosphate. The protein operates within carbohydrate metabolism; tricarboxylic acid cycle; succinate from succinyl-CoA (ligase route): step 1/1. Its function is as follows. Succinyl-CoA synthetase functions in the citric acid cycle (TCA), coupling the hydrolysis of succinyl-CoA to the synthesis of either ATP or GTP and thus represents the only step of substrate-level phosphorylation in the TCA. The beta subunit provides nucleotide specificity of the enzyme and binds the substrate succinate, while the binding sites for coenzyme A and phosphate are found in the alpha subunit. This chain is Succinate--CoA ligase [ADP-forming] subunit beta, found in Sorangium cellulosum (strain So ce56) (Polyangium cellulosum (strain So ce56)).